The following is a 310-amino-acid chain: Oxygen-dependent coproporphyrinogen-III oxidase (310 aa).

Residue Ser97 participates in substrate binding. A divalent metal cation is bound by residues His101 and His111. His111 serves as the catalytic Proton donor. 113–115 (NFR) serves as a coordination point for substrate. His150 and His180 together coordinate a divalent metal cation. The segment at 245–280 (YVEFNLLYDRGTRFGLEFGGRTESILMSLPPRVVWR) is important for dimerization. 263 to 265 (GGR) provides a ligand contact to substrate.

It belongs to the aerobic coproporphyrinogen-III oxidase family. In terms of assembly, homodimer. A divalent metal cation is required as a cofactor.

It localises to the cytoplasm. It carries out the reaction coproporphyrinogen III + O2 + 2 H(+) = protoporphyrinogen IX + 2 CO2 + 2 H2O. It participates in porphyrin-containing compound metabolism; protoporphyrin-IX biosynthesis; protoporphyrinogen-IX from coproporphyrinogen-III (O2 route): step 1/1. Its function is as follows. Involved in the heme biosynthesis. Catalyzes the aerobic oxidative decarboxylation of propionate groups of rings A and B of coproporphyrinogen-III to yield the vinyl groups in protoporphyrinogen-IX. In Coxiella burnetii (strain Dugway 5J108-111), this protein is Oxygen-dependent coproporphyrinogen-III oxidase.